A 1233-amino-acid polypeptide reads, in one-letter code: Insulin receptor substrate 1 (1233 aa).

The residue at position 3 (S3) is a Phosphoserine. Residues 3–133 form a mediates interaction with PHIP region; it reads SPPDTDGFSD…AGGGCGGSCS (131 aa). Residues 12–115 form the PH domain; that stretch reads DVRKVGYLRK…WYQALLQLHN (104 aa). S99 is subject to Phosphoserine; by CK2. The region spanning 155 to 259 is the IRS-type PTB domain; the sequence is FKEVWQVILK…EAMRAMSDEF (105 aa). A disordered region spans residues 257–425; it reads DEFRPRSKSQ…SDGGFISSDE (169 aa). The span at 264–276 shows a compositional bias: low complexity; sequence KSQSSSSCSNPIS. A phosphoserine; by RPS6KB1 mark is found at S265 and S302. S307 bears the Phosphoserine; by IKKB, MAPK8 and RPS6KB1 mark. A phosphoserine mark is found at S318, S325, S340, and S343. The span at 349–358 shows a compositional bias: basic residues; the sequence is THAHRHRGSS. Low complexity-rich tracts occupy residues 378 to 399 and 407 to 419; these read SPSATSPVSLSSSSTSGHGSTS and SSASVSGSPSDGG. A Phosphoserine modification is found at S414. T441 and T448 each carry phosphothreonine. At Y460 the chain carries Phosphotyrosine; by INSR. Residues 460–463 carry the YXXM motif 1 motif; it reads YICM. Phosphoserine; by RPS6KB1 is present on S522. Short sequence motifs (YXXM motif) lie at residues 546 to 549 and 608 to 611; these read YTEM and YMPM. Phosphotyrosine; by INSR is present on Y608. At S612 the chain carries Phosphoserine. The residue at position 628 (Y628) is a Phosphotyrosine; by INSR. The YXXM motif 4 motif lies at 628–631; sequence YMPM. S632 bears the Phosphoserine; by RPS6KB1 and ROCK2 mark. The interval 651–720 is disordered; it reads QRVDPNGYMM…PPVESGGGKL (70 aa). Phosphotyrosine is present on Y658. The short motif at 658–661 is the YXXM motif 5 element; sequence YMMM. A compositionally biased stretch (low complexity) spans 662-689; the sequence is SPSGSCSPDIGGGSSSSSSISAAPSGSS. The YXXM motif 6 signature appears at 727 to 730; the sequence is YMNM. Positions 766-985 are disordered; it reads FKHTQRPGEP…VPNSRGDYMT (220 aa). Over residues 771-780 the composition is skewed to basic and acidic residues; sequence RPGEPEEGAR. Low complexity-rich tracts occupy residues 785–794 and 801–810; these read RLSSSSGRLR and DSSSSTSSDS. S789 carries the phosphoserine; by AMPK and SIK2 modification. The residue at position 887 (S887) is a Phosphoserine. A phosphotyrosine; by INSR mark is found at Y891, Y935, and Y983. The tract at residues 891–893 is GRB2-binding; the sequence is YVN. Short sequence motifs (YXXM motif) lie at residues 935-938, 983-986, and 1006-1009; these read YMNM, YMTM, and YADM. The interval 1015 to 1137 is disordered; the sequence is AEKASLPRPT…GSEDVKRHSS (123 aa). Low complexity predominate over residues 1032 to 1042; that stretch reads STASSSASVTP. 2 stretches are compositionally biased toward polar residues: residues 1043–1052 and 1069–1081; these read QGATAEQATH and TRVNLSPNHNQSA. S1096 and S1097 each carry phosphoserine. Over residues 1116–1129 the composition is skewed to gly residues; it reads AAVGGSGGGGGGGS. At Y1173 the chain carries Phosphotyrosine; by INSR. The segment at 1178–1233 is disordered; sequence LAKEHSQDCPSQQQSLPPPPPHQPLGSNEGNSPRRSSEDLSNYASISFQKQPEDRQ. K1180 participates in a covalent cross-link: Glycyl lysine isopeptide (Lys-Gly) (interchain with G-Cter in ubiquitin). Residues 1203–1227 are compositionally biased toward polar residues; the sequence is GSNEGNSPRRSSEDLSNYASISFQK. Phosphotyrosine; by INSR is present on Y1220.

As to quaternary structure, interacts (via phosphorylated YXXM motifs) with PIK3R1. Interacts with ROCK1. Interacts with GRB2. Interacts with SOCS7. Interacts (via IRS-type PTB domain) with IGF1R and INSR (via the tyrosine-phosphorylated NPXY motif). Interacts with UBTF and PIK3CA. Interacts (via PH domain) with PHIP. Interacts with FER. Interacts with ALK. Interacts with EIF2AK2/PKR. Interacts with GKAP1. Interacts with DGKZ in the absence of insulin; insulin stimulation decreases this interaction. Found in a ternary complex with DGKZ and PIP5K1A in the absence of insulin stimulation. Interacts with SQSTM1; the interaction is disrupted by the presence of tensin TNS2. Interacts with NCK1 (via SH2 domain). Interacts with NCK2 (via SH3 domain). Interacts with SH2B1; this interaction enhances leptin-induced activation of the PI3-kinase pathway. Interacts with DVL2; this interaction promotes the Wnt/beta-catenin signaling pathway. Serine phosphorylation of IRS1 is a mechanism for insulin resistance. Ser-307 phosphorylation inhibits insulin action through disruption of IRS1 interaction with the insulin receptor. Phosphorylation of Tyr-891 is required for GRB2-binding. Phosphorylated by ALK. Phosphorylated at Ser-265, Ser-302, Ser-632 and Ser-1097 by RPS6KB1; phosphorylation induces accelerated degradation of IRS1. Phosphorylated on tyrosine residues in response to insulin. In skeletal muscles, dephosphorylated on Tyr-608 by TNS2 under anabolic conditions; dephosphorylation results in the proteasomal degradation of IRS1. In terms of processing, ubiquitinated by the Cul7-RING(FBXW8) complex in a mTOR-dependent manner, leading to its degradation: the Cul7-RING(FBXW8) complex recognizes and binds IRS1 previously phosphorylated by S6 kinase (RPS6KB1 or RPS6KB2). Ubiquitinated by TRAF4 through 'Lys-29' linkage; this ubiquitination regulates the interaction of IRS1 with IGFR and IRS1 tyrosine phosphorylation upon IGF1 stimulation. Post-translationally, S-nitrosylation at by BLVRB inhibits its activity. Expressed in osteoblasts, but not in osteoclasts.

The protein resides in the cytoplasm. The protein localises to the nucleus. Signaling adapter protein that participates in the signal transduction from two prominent receptor tyrosine kinases, insulin receptor/INSR and insulin-like growth factor I receptor/IGF1R. Plays therefore an important role in development, growth, glucose homeostasis as well as lipid metabolism. Upon phosphorylation by the insulin receptor, functions as a signaling scaffold that propagates insulin action through binding to SH2 domain-containing proteins including the p85 regulatory subunit of PI3K, NCK1, NCK2, GRB2 or SHP2. Recruitment of GRB2 leads to the activation of the guanine nucleotide exchange factor SOS1 which in turn triggers the Ras/Raf/MEK/MAPK signaling cascade. Activation of the PI3K/AKT pathway is responsible for most of insulin metabolic effects in the cell, and the Ras/Raf/MEK/MAPK is involved in the regulation of gene expression and in cooperation with the PI3K pathway regulates cell growth and differentiation. Acts a positive regulator of the Wnt/beta-catenin signaling pathway through suppression of DVL2 autophagy-mediated degradation leading to cell proliferation. The polypeptide is Insulin receptor substrate 1 (Irs1) (Mus musculus (Mouse)).